A 328-amino-acid chain; its full sequence is Deoxynucleotidyltransferase terminal-interacting protein 1 (328 aa).

Disordered regions lie at residues 1 to 30 (MGAT…GAAG) and 142 to 176 (ELPG…HVLS). A compositionally biased stretch (gly residues) spans 12–22 (GPGGAERGGLE). Residues 56–147 (MTTSFTDPAI…RLAHELPGIK (92 aa)) are important for dimerization. The span at 142 to 158 (ELPGIKRGRQAEEESHR) shows a compositional bias: basic and acidic residues. Residues 158–172 (RGSPIPKKRKGRPPG) constitute a DNA-binding region (a.T hook). Phosphoserine is present on Ser-160. A Nuclear localization signal motif is present at residues 163-169 (PKKRKGR). The interval 196 to 315 (REGPKWDPAR…MRKYMETLRT (120 aa)) is important for DNA and nucleosome binding. Positions 215 to 236 (GSRANKALGMGGTRGRIYIKHP) form a DNA-binding region, H-T-H motif.

As to quaternary structure, monomer and homodimer. A minor proportion may form homotrimers. Interacts with ZNF541. Interacts with the terminal deoxynucleotidyltransferase DNTT. Interacts with TRERF1. Identified in a histone deacetylase complex that contains DNTTIP1, HDAC1 and MIDEAS; this complex assembles into a tetramer that contains four copies of each protein chain. Component of a histone deacetylase complex containing DNTTIP1, ZNF541, HDAC1 and HDAC2. Identified in a complex with KCTD19, HDAC1, HDAC2 and ZNF541.

It is found in the nucleus. Functionally, increases DNTT terminal deoxynucleotidyltransferase activity (in vitro). Also acts as a transcriptional regulator, binding to the consensus sequence 5'-GNTGCATG-3' following an AT-tract. Associates with RAB20 promoter and positively regulates its transcription. Binds DNA and nucleosomes; may recruit HDAC1 complexes to nucleosomes or naked DNA. This Mus musculus (Mouse) protein is Deoxynucleotidyltransferase terminal-interacting protein 1 (Dnttip1).